The sequence spans 304 residues: GTP cyclohydrolase FolE2 (304 aa).

It belongs to the GTP cyclohydrolase IV family.

It catalyses the reaction GTP + H2O = 7,8-dihydroneopterin 3'-triphosphate + formate + H(+). The protein operates within cofactor biosynthesis; 7,8-dihydroneopterin triphosphate biosynthesis; 7,8-dihydroneopterin triphosphate from GTP: step 1/1. Converts GTP to 7,8-dihydroneopterin triphosphate. The chain is GTP cyclohydrolase FolE2 from Bdellovibrio bacteriovorus (strain ATCC 15356 / DSM 50701 / NCIMB 9529 / HD100).